The primary structure comprises 466 residues: UDP-glycosyltransferase 91B1 (466 aa).

UDP-alpha-D-glucose contacts are provided by residues threonine 286, 342 to 344 (VPQ), 359 to 367 (HCGWGSAVE), and 381 to 384 (NLDQ).

Belongs to the UDP-glycosyltransferase family.

The sequence is that of UDP-glycosyltransferase 91B1 (UGT91B1) from Arabidopsis thaliana (Mouse-ear cress).